Here is a 214-residue protein sequence, read N- to C-terminus: MEKDLANYRRSYEKGELLERDIPDDPYILFESWFNLADNSKNVEEANAMSISTVGKDLMPKTRVVLLKSFDPDGLYFYTNYDSVKGRDLDENPKCCISFFWPSLEKQIIIQGEVVKVSSKKSEEYFHSRPRGSQLGAHASNQSSVIPSREYLEERLTKLEQKYLKKEIPKPKEWGGFLFKPVAFEFWQGRASRLHDRILFTKKDDNWKIERLAP.

Substrate contacts are provided by residues R9 to Y12 and K68. FMN is bound by residues R63–K68, Y78–T79, K85, and Q107. Positions 125, 129, and 133 each coordinate substrate. FMN is bound by residues Q142–S143 and W187. Residue R193 to H195 participates in substrate binding. R197 contacts FMN.

It belongs to the pyridoxamine 5'-phosphate oxidase family. In terms of assembly, homodimer. FMN is required as a cofactor.

The enzyme catalyses pyridoxamine 5'-phosphate + O2 + H2O = pyridoxal 5'-phosphate + H2O2 + NH4(+). It catalyses the reaction pyridoxine 5'-phosphate + O2 = pyridoxal 5'-phosphate + H2O2. It functions in the pathway cofactor metabolism; pyridoxal 5'-phosphate salvage; pyridoxal 5'-phosphate from pyridoxamine 5'-phosphate: step 1/1. It participates in cofactor metabolism; pyridoxal 5'-phosphate salvage; pyridoxal 5'-phosphate from pyridoxine 5'-phosphate: step 1/1. In terms of biological role, catalyzes the oxidation of either pyridoxine 5'-phosphate (PNP) or pyridoxamine 5'-phosphate (PMP) into pyridoxal 5'-phosphate (PLP). This chain is Pyridoxine/pyridoxamine 5'-phosphate oxidase, found in Christiangramia forsetii (strain DSM 17595 / CGMCC 1.15422 / KT0803) (Gramella forsetii).